We begin with the raw amino-acid sequence, 300 residues long: Ribonuclease HIII (300 aa).

The RNase H type-2 domain maps to 86–300; that stretch reads RPRLGVDESG…FYEICDSTDI (215 aa). D92, E93, and D196 together coordinate a divalent metal cation.

It belongs to the RNase HII family. RnhC subfamily. It depends on Mn(2+) as a cofactor. Requires Mg(2+) as cofactor.

Its subcellular location is the cytoplasm. The enzyme catalyses Endonucleolytic cleavage to 5'-phosphomonoester.. Functionally, endonuclease that specifically degrades the RNA of RNA-DNA hybrids. The polypeptide is Ribonuclease HIII (Chlamydia abortus (strain DSM 27085 / S26/3) (Chlamydophila abortus)).